Here is a 411-residue protein sequence, read N- to C-terminus: LL-diaminopimelate aminotransferase (411 aa).

Positions 16 and 43 each coordinate substrate. Pyridoxal 5'-phosphate is bound by residues Y73, 109–110 (AK), Y133, N188, Y219, and 247–249 (SYS). The substrate site is built by K110, Y133, and N188. K250 bears the N6-(pyridoxal phosphate)lysine mark. R258 and N293 together coordinate pyridoxal 5'-phosphate. Positions 293 and 389 each coordinate substrate.

The protein belongs to the class-I pyridoxal-phosphate-dependent aminotransferase family. LL-diaminopimelate aminotransferase subfamily. Homodimer. It depends on pyridoxal 5'-phosphate as a cofactor.

It carries out the reaction (2S,6S)-2,6-diaminopimelate + 2-oxoglutarate = (S)-2,3,4,5-tetrahydrodipicolinate + L-glutamate + H2O + H(+). It participates in amino-acid biosynthesis; L-lysine biosynthesis via DAP pathway; LL-2,6-diaminopimelate from (S)-tetrahydrodipicolinate (aminotransferase route): step 1/1. In terms of biological role, involved in the synthesis of meso-diaminopimelate (m-DAP or DL-DAP), required for both lysine and peptidoglycan biosynthesis. Catalyzes the direct conversion of tetrahydrodipicolinate to LL-diaminopimelate. In Methanosphaera stadtmanae (strain ATCC 43021 / DSM 3091 / JCM 11832 / MCB-3), this protein is LL-diaminopimelate aminotransferase.